A 200-amino-acid chain; its full sequence is Phospholipase A2 inhibitor gamma subunit B (200 aa).

Residues 1–19 (MKFLLFCCLFGTFLATGMC) form the signal peptide. 8 disulfide bridges follow: Cys22-Cys46, Cys25-Cys32, Cys39-Cys67, Cys73-Cys94, Cys95-Cys100, Cys120-Cys145, Cys138-Cys165, and Cys171-Cys191.

It belongs to the CNF-like-inhibitor family. As to quaternary structure, heteromer composed of subunit A and subunit B.

It is found in the secreted. In terms of biological role, inhibits the enzymatic activity of the phospholipase A2 (PLA2). This Elaphe climacophora (Japanese rat snake) protein is Phospholipase A2 inhibitor gamma subunit B.